A 297-amino-acid chain; its full sequence is HTH-type transcriptional regulator ArgP (297 aa).

An HTH lysR-type domain is found at 4–60 (PDYRTLQALDAVIRERGFERAAQKLCITQSAVSQRIKQLENMFGQPLLVRTVPPRPT). Positions 21-40 (FERAAQKLCITQSAVSQRIK) form a DNA-binding region, H-T-H motif.

The protein belongs to the LysR transcriptional regulatory family. As to quaternary structure, homodimer.

Its function is as follows. Controls the transcription of genes involved in arginine and lysine metabolism. This Klebsiella pneumoniae (strain 342) protein is HTH-type transcriptional regulator ArgP.